Reading from the N-terminus, the 222-residue chain is Coiled-coil domain-containing protein 43 homolog (222 aa).

The stretch at 80-111 (ETENKLKLTNLKLEQELKIKETTQSEINEEEK) forms a coiled coil. 2 disordered regions span residues 102–126 (TQSE…EQKK) and 159–222 (EDNK…KRRL). Composition is skewed to basic and acidic residues over residues 112-126 (YENP…EQKK) and 175-212 (RIAD…EEKK). Residues 168–222 (GENLNAKRIADEEKAKREKSKIEHQKKVQRDKEALEKQKRDEEKKKTVKKEKRRL) are a coiled coil. A compositionally biased stretch (basic residues) spans 213–222 (KTVKKEKRRL).

It belongs to the CCDC43 family.

The protein is Coiled-coil domain-containing protein 43 homolog of Dictyostelium discoideum (Social amoeba).